The sequence spans 409 residues: Diels-Alderase ucsH (409 aa).

The helical transmembrane segment at 386-406 (IYFFICMLLAVVTFGYINILE) threads the bilayer.

Belongs to the Diels-Alderase family.

It localises to the membrane. The protein operates within mycotoxin biosynthesis. Diels-Alderase; part of the gene cluster that mediates the biosynthesis of UCS1025A, a member of the pyrrolizidinone family that acts as a strong telomerase inhibitor and displays potent antibacterial and antitumor properties. These compounds share a hemiaminal-containing pyrrolizidinone core fused with a gamma-lactone, giving a furopyrrolizidine that is connected to a decalin fragment. The polyketide synthase module (PKS) of the PKS-NRPS ucsA is responsible for the synthesis of the polyketide backbone via the condensation of an acetyl-CoA starter unit with 6 malonyl-CoA units. The downstream nonribosomal peptide synthetase (NRPS) module then amidates the carboxyl end of the polyketide with a 2S,3S-methylproline derived from L-isoleucine by the 2-oxoglutarate-dependent dioxygenase ucsF which converts L-isoleucine to (4S,5S)-4-methylpyrroline-5-carboxylate that is further converted to 2S,3S-methylproline by the pyrroline-5-carboxylate reductase ucsG. Reductive release of the completed aminoacyl polyketide from the assembly line can form the 3-pyrrolin-2-one structure via an intramolecular Knoevenagel reaction. Because ucsA lacks a designated enoylreductase (ER) domain, the required activity is provided the enoyl reductase ucsL. This keto acyclic precursor is the substrate of the Diels-Alderase ucsH, that catalyzes the Diels-Alder cycloaddition. Oxidation of the 3S-methyl group to a carboxylate by the cytochrome P450 monooxygenase ucsK allows an oxa-Michael cyclization that might involve the reductase/dehydrogenase ucsI and which furnishes the furopyrrolizidine. The oxidase ucsJ likely plays a critical role in stereoselective reduction of the C5-C6 double bond to afford the required R-configured carboxylate group. Further enolization and oxidation at C5 by an unidentified enzyme affords the last intermediate that can undergo oxa-Michael cyclization to yield UCS1025A. The chain is Diels-Alderase ucsH from Acremonium sp.